A 95-amino-acid chain; its full sequence is MQIDDKMLEKLEKLSALKIPDQNREEFKSQLGKIVDFVDILNELDLDGIEATVSTIGGGTPFREDISKEGSVIDGILTHAPKKQNRYFEVPKIIE.

It belongs to the GatC family. As to quaternary structure, heterotrimer of A, B and C subunits.

It carries out the reaction L-glutamyl-tRNA(Gln) + L-glutamine + ATP + H2O = L-glutaminyl-tRNA(Gln) + L-glutamate + ADP + phosphate + H(+). It catalyses the reaction L-aspartyl-tRNA(Asn) + L-glutamine + ATP + H2O = L-asparaginyl-tRNA(Asn) + L-glutamate + ADP + phosphate + 2 H(+). Functionally, allows the formation of correctly charged Asn-tRNA(Asn) or Gln-tRNA(Gln) through the transamidation of misacylated Asp-tRNA(Asn) or Glu-tRNA(Gln) in organisms which lack either or both of asparaginyl-tRNA or glutaminyl-tRNA synthetases. The reaction takes place in the presence of glutamine and ATP through an activated phospho-Asp-tRNA(Asn) or phospho-Glu-tRNA(Gln). The chain is Aspartyl/glutamyl-tRNA(Asn/Gln) amidotransferase subunit C from Campylobacter fetus subsp. fetus (strain 82-40).